Here is a 572-residue protein sequence, read N- to C-terminus: Mitochondrial chaperone TCM62 (572 aa).

The N-terminal 16 residues, 1-16, are a transit peptide targeting the mitochondrion; that stretch reads MLRNCLRKLGNHQTKC. Over 17 to 471 the chain is Mitochondrial matrix; it reads SVKTLHTPIY…KANEPNFMTK (455 aa). A helical transmembrane segment spans residues 472-488; the sequence is VGINAVLSAVILPSEVA. Residues 489–572 lie on the Mitochondrial intermembrane side of the membrane; the sequence is FKNAYGYNYY…VYKKPERHKA (84 aa).

This sequence belongs to the chaperonin (HSP60) family. Forms a high molecular mass protein complex of approximately 850 kDa.

Its subcellular location is the mitochondrion inner membrane. Functionally, chaperone. Required for the assembly of succinate dehydrogenase subunits. Ensures mitochondrial gene expression at elevated temperatures and prevents heat-aggregation of the ribosomal subunit VAR1. This is Mitochondrial chaperone TCM62 (TCM62) from Saccharomyces cerevisiae (strain YJM789) (Baker's yeast).